The following is a 154-amino-acid chain: 3-hydroxyacyl-[acyl-carrier-protein] dehydratase FabZ (154 aa).

His-58 is a catalytic residue.

The protein belongs to the thioester dehydratase family. FabZ subfamily.

The protein resides in the cytoplasm. It catalyses the reaction a (3R)-hydroxyacyl-[ACP] = a (2E)-enoyl-[ACP] + H2O. Its function is as follows. Involved in unsaturated fatty acids biosynthesis. Catalyzes the dehydration of short chain beta-hydroxyacyl-ACPs and long chain saturated and unsaturated beta-hydroxyacyl-ACPs. The polypeptide is 3-hydroxyacyl-[acyl-carrier-protein] dehydratase FabZ (Protochlamydia amoebophila (strain UWE25)).